Consider the following 25-residue polypeptide: Snake venom metalloproteinase catroxase (25 aa).

Position 9 (E9) interacts with Ca(2+).

It belongs to the venom metalloproteinase (M12B) family. Monomer. Zn(2+) serves as cofactor. In terms of tissue distribution, expressed by the venom gland.

It is found in the secreted. Inhibited by EDTA, beta-mercaptoethanol, but not by PMSF, p-tosyl-L-phenylalanine chloromethyl ketone, p-tosyl-L-lysine chloromethyl ketone, soybean trypsin inhibitor and aprotinin. Its function is as follows. Metalloprotease that is highly active against alpha-(FGA) and beta-chains (FGB) of fibrinogen molecules. The polypeptide is Snake venom metalloproteinase catroxase (Crotalus atrox (Western diamondback rattlesnake)).